A 478-amino-acid chain; its full sequence is Alpha-1,3-mannosyl-glycoprotein 4-beta-N-acetylglucosaminyltransferase C (478 aa).

The Cytoplasmic portion of the chain corresponds to M1–T25. Residues V26–I43 form a helical; Signal-anchor for type II membrane protein membrane-spanning segment. The Lumenal segment spans residues E44–S478. N-linked (GlcNAc...) asparagine glycans are attached at residues N84 and N215.

The protein belongs to the glycosyltransferase 54 family. Requires a divalent metal cation as cofactor.

The protein resides in the golgi apparatus membrane. It carries out the reaction N(4)-{beta-D-GlcNAc-(1-&gt;2)-alpha-D-Man-(1-&gt;3)-[beta-D-GlcNAc-(1-&gt;2)-alpha-D-Man-(1-&gt;6)]-beta-D-Man-(1-&gt;4)-beta-D-GlcNAc-(1-&gt;4)-beta-D-GlcNAc}-L-asparaginyl-[protein] + UDP-N-acetyl-alpha-D-glucosamine = N(4)-{beta-D-GlcNAc-(1-&gt;2)-[beta-D-GlcNAc-(1-&gt;4)]-alpha-D-Man-(1-&gt;3)-[beta-D-GlcNAc-(1-&gt;2)-alpha-D-Man-(1-&gt;6)]-beta-D-Man-(1-&gt;4)-beta-D-GlcNAc-(1-&gt;4)-beta-D-GlcNAc}-L-asparaginyl-[protein] + UDP + H(+). Its pathway is protein modification; protein glycosylation. Its function is as follows. Glycosyltransferase that participates in the transfer of N-acetylglucosamine (GlcNAc) to the core mannose residues of N-linked glycans. Catalyzes the formation of the GlcNAcbeta1-4 branch on the GlcNAcbeta1-2Manalpha1-3 arm of the core structure of N-linked glycans. Essential for the production of tri- and tetra-antennary N-linked sugar chains. Does not catalyze the transfer of GlcNAc to the Manalpha1-6 arm to form GlcNAcBeta1-4Manalpha1-6 linkage ('GnT-VI' activity). The polypeptide is Alpha-1,3-mannosyl-glycoprotein 4-beta-N-acetylglucosaminyltransferase C (Mgat4c) (Mus musculus (Mouse)).